The following is a 1051-amino-acid chain: Helicase POLQ-like (1051 aa).

Residues 1–10 are compositionally biased toward basic residues; sequence MANKHNLCKK. Disordered regions lie at residues 1 to 28 and 61 to 112; these read MANK…AKRQ and LFGT…APTD. Composition is skewed to polar residues over residues 64–78 and 89–102; these read TQAT…QSGS and SFPS…NSAS. Over residues 103–112 the composition is skewed to basic and acidic residues; it reads KPDEASAPTD. The 173-residue stretch at 274–446 folds into the Helicase ATP-binding domain; sequence LPAIRQRKNL…FLNADVYTRG (173 aa). 287-294 lines the ATP pocket; it reads LPTSGGKT. A DEAH box motif is present at residues 391–394; it reads DELH. Residues 497–689 form the Helicase C-terminal domain; sequence HLAGLISECA…NEAVGLQSLI (193 aa).

This sequence belongs to the helicase family. SKI2 subfamily.

It is found in the nucleus. Its subcellular location is the chromosome. The enzyme catalyses Couples ATP hydrolysis with the unwinding of duplex DNA by translocating in the 3'-5' direction.. The catalysed reaction is ATP + H2O = ADP + phosphate + H(+). Single-stranded 3'-5' DNA helicase that plays a key role in homology-driven double-strand break (DSB) repair. Involved in different DSB repair mechanisms that are guided by annealing of extensive stretches of complementary bases at break ends, such as microhomology-mediated end-joining (MMEJ), single-strand annealing (SSA) or synthesis-dependent strand annealing (SDSA). The chain is Helicase POLQ-like from Drosophila melanogaster (Fruit fly).